Here is a 282-residue protein sequence, read N- to C-terminus: U1 small nuclear ribonucleoprotein A (282 aa).

Alanine 2 bears the N-acetylalanine mark. Residues 10-89 (HTIYINNLNE…KPMRIQYAKT (80 aa)) form the RRM 1 domain. At lysine 60 the chain carries N6-acetyllysine. Positions 100–132 (TFVERDRKREKRKPKSQETPATKKAVQGGGATP) are disordered. Position 131 is a phosphothreonine (threonine 131). Omega-N-methylarginine is present on arginine 152. The RRM 2 domain occupies 208–282 (HILFLTNLPE…NAMKISFAKK (75 aa)).

This sequence belongs to the RRM U1 A/B'' family. In terms of assembly, U1 snRNP is composed of the 7 core Sm proteins SNRPB, SNRPD1, SNRPD2, SNRPD3, SNRPE, SNRPF and SNRPG that assemble in a heptameric protein ring on the Sm site of the small nuclear RNA to form the core snRNP, and at least three U1 snRNP-specific proteins SNRNP70/U1-70K, SNRPA/U1-A and SNRPC/U1-C. Interacts with SFPQ; component of a snRNP-free complex with SFPQ. Interacts with IVNS1ABP (via BACK domain); the interaction is indirect.

It is found in the nucleus. Component of the spliceosomal U1 snRNP, which is essential for recognition of the pre-mRNA 5' splice-site and the subsequent assembly of the spliceosome. U1 snRNP is the first snRNP to interact with pre-mRNA. This interaction is required for the subsequent binding of U2 snRNP and the U4/U6/U5 tri-snRNP. SNRPA binds stem loop II of U1 snRNA. In a snRNP-free form (SF-A) may be involved in coupled pre-mRNA splicing and polyadenylation process. May bind preferentially to the 5'-UGCAC-3' motif on RNAs. This chain is U1 small nuclear ribonucleoprotein A (SNRPA), found in Homo sapiens (Human).